The chain runs to 303 residues: Probable cell division protein WhiA (303 aa).

A DNA-binding region (H-T-H motif) is located at residues 272–303 (SIQQIADSLETPLSKSGVNHRLRKINKIADEL).

The protein belongs to the WhiA family.

In terms of biological role, involved in cell division and chromosome segregation. The chain is Probable cell division protein WhiA from Streptococcus agalactiae serotype Ia (strain ATCC 27591 / A909 / CDC SS700).